Reading from the N-terminus, the 124-residue chain is Small ribosomal subunit protein uS12 (124 aa).

3-methylthioaspartic acid is present on Asp-89. The interval 103-124 is disordered; the sequence is DTAGVKDRRQSRSKYGAKSPKE.

This sequence belongs to the universal ribosomal protein uS12 family. Part of the 30S ribosomal subunit. Contacts proteins S8 and S17. May interact with IF1 in the 30S initiation complex.

In terms of biological role, with S4 and S5 plays an important role in translational accuracy. Functionally, interacts with and stabilizes bases of the 16S rRNA that are involved in tRNA selection in the A site and with the mRNA backbone. Located at the interface of the 30S and 50S subunits, it traverses the body of the 30S subunit contacting proteins on the other side and probably holding the rRNA structure together. The combined cluster of proteins S8, S12 and S17 appears to hold together the shoulder and platform of the 30S subunit. The protein is Small ribosomal subunit protein uS12 of Prochlorococcus marinus (strain NATL2A).